A 200-amino-acid chain; its full sequence is MQLAELVAACRWIGAKGWSPATGGNMSQRRDVHSCYITESGLDKGHLDAGDFLTVDIQTGAAQPGRRPSAETGLHTFLYRRFPEVGCVLHTHSVSATVLSRAEQGSTLRLSGYEMQKSLTGQTDHREEVAIAVFDNSQDIPALVQRIALQDALTPLRYGFLMCGHGLTCWGRDVREARLHLEGLEFLFECEWRRRLLEAQ.

Positions 90 and 92 each coordinate Zn(2+).

The protein belongs to the aldolase class II family. MtnB subfamily. Requires Zn(2+) as cofactor.

It carries out the reaction 5-(methylsulfanyl)-D-ribulose 1-phosphate = 5-methylsulfanyl-2,3-dioxopentyl phosphate + H2O. It functions in the pathway amino-acid biosynthesis; L-methionine biosynthesis via salvage pathway; L-methionine from S-methyl-5-thio-alpha-D-ribose 1-phosphate: step 2/6. Functionally, catalyzes the dehydration of methylthioribulose-1-phosphate (MTRu-1-P) into 2,3-diketo-5-methylthiopentyl-1-phosphate (DK-MTP-1-P). The sequence is that of Methylthioribulose-1-phosphate dehydratase from Sodalis glossinidius (strain morsitans).